The sequence spans 122 residues: Glycine cleavage system H protein (122 aa).

One can recognise a Lipoyl-binding domain in the interval 19–101 (TATIGITKHA…EGNSWLYKIK (83 aa)). At K60 the chain carries N6-lipoyllysine.

This sequence belongs to the GcvH family. The glycine cleavage system is composed of four proteins: P, T, L and H. It depends on (R)-lipoate as a cofactor.

The glycine cleavage system catalyzes the degradation of glycine. The H protein shuttles the methylamine group of glycine from the P protein to the T protein. The chain is Glycine cleavage system H protein from Dinoroseobacter shibae (strain DSM 16493 / NCIMB 14021 / DFL 12).